Consider the following 114-residue polypeptide: MKKKYTIRKKIFGFLEKPRVSIFRSNKHIYAQVIDDYKGNTLISASSKKLLKFYKKRREKKITKKELSYKIGNLLGKIIKSYGISKILFDRNGYIYHGRVKALAKGLRNVGLQF.

The protein belongs to the universal ribosomal protein uL18 family. In terms of assembly, part of the 50S ribosomal subunit; part of the 5S rRNA/L5/L18/L25 subcomplex. Contacts the 5S and 23S rRNAs.

Functionally, this is one of the proteins that bind and probably mediate the attachment of the 5S RNA into the large ribosomal subunit, where it forms part of the central protuberance. This chain is Large ribosomal subunit protein uL18, found in Aster yellows phytoplasma.